A 51-amino-acid polypeptide reads, in one-letter code: Lantibiotic streptococcin A-M49 (51 aa).

Positions 1-25 (MTKEHEIINSIQEVSLEELDQIIGA) are excised as a propeptide. 2 consecutive cross-links (beta-methyllanthionine (Thr-Cys)) follow at residues 33-38 (TISHEC) and 42-50 (TWAFLATCC). Residues 35–49 (SHECHLNTWAFLATC) constitute a cross-link (lanthionine (Ser-Cys)). T48 carries the 2,3-didehydrobutyrine modification.

The protein belongs to the type A lantibiotic family. Maturation of lantibiotics involves the enzymatic conversion of Thr, and Ser into dehydrated AA and the formation of thioether bonds with cysteine. This is followed by membrane translocation and cleavage of the modified precursor.

The protein localises to the secreted. It localises to the cell surface. Lanthionine-containing peptide antibiotic (lantibiotic) active on certain Gram-positive bacteria. The bactericidal activity of lantibiotics is based on depolarization of energized bacterial cytoplasmic membranes, initiated by the formation of aqueous transmembrane pores. This is Lantibiotic streptococcin A-M49 (scnA') from Streptococcus pyogenes serotype M49.